We begin with the raw amino-acid sequence, 367 residues long: MVLSSEASSAADHSAAAPIPTSSWPQLLGRLTEGKHLEPGQAGWAMEQIMSGNARPAQVAAFAVAMKMKVPTAGEVGELADVMLAYARPMPADLIRDDTVDIVGTGGDGVNTVNLSTMASIVVAAAGVPVVKHGNRAASSLAGGADTLEALGVRIDLGPDQVARSLNEIGIGFCFAPQFHPSYRQASVVRREIGVPTVFNLLGPLTNPARPRAGLIGCAFADLAEIMAGVFATRGSSVLVVHGDDGLDELTTTTTSTIWRVQAGTVDKLTFDPGDFGFARAELSQLLGGDPQANAAEARAVLGGAAGPVRDAVVLNAAGAIVAHAGLSSRAEWLPAWQDGLQRAAVAIDSGAAEQLLARWVRFSQHV.

Over residues 1-17 (MVLSSEASSAADHSAAA) the composition is skewed to low complexity. The tract at residues 1 to 22 (MVLSSEASSAADHSAAAPIPTS) is disordered. 5-phospho-alpha-D-ribose 1-diphosphate contacts are provided by residues Gly-104, 107-108 (GD), Thr-112, 114-117 (NLST), 132-140 (KHGNRAASS), and Gly-144. Residue Gly-104 coordinates anthranilate. Residue Ser-116 participates in Mg(2+) binding. Residue Asn-135 coordinates anthranilate. Arg-190 serves as a coordination point for anthranilate. Positions 248 and 249 each coordinate Mg(2+).

The protein belongs to the anthranilate phosphoribosyltransferase family. Homodimer. Requires Mg(2+) as cofactor.

It carries out the reaction N-(5-phospho-beta-D-ribosyl)anthranilate + diphosphate = 5-phospho-alpha-D-ribose 1-diphosphate + anthranilate. It participates in amino-acid biosynthesis; L-tryptophan biosynthesis; L-tryptophan from chorismate: step 2/5. Its function is as follows. Catalyzes the transfer of the phosphoribosyl group of 5-phosphorylribose-1-pyrophosphate (PRPP) to anthranilate to yield N-(5'-phosphoribosyl)-anthranilate (PRA). The protein is Anthranilate phosphoribosyltransferase of Mycobacterium marinum (strain ATCC BAA-535 / M).